The sequence spans 127 residues: Major sperm protein 19/31/40/45/50/51/53/59/61/65/81/113/142 (127 aa).

A2 carries the N-acetylalanine modification. The 118-residue stretch at 9–126 (DIQTQPGTKI…RRKNLPIEYN (118 aa)) folds into the MSP domain.

As to quaternary structure, helical subfilaments are built from MSP dimers; filaments are formed from two subfilaments coiling round one another; and filaments themselves supercoil to produce bundles. Sperm.

Its subcellular location is the cell projection. It is found in the pseudopodium. The protein localises to the cytoplasm. The protein resides in the cytoskeleton. Functionally, central component in molecular interactions underlying sperm crawling. Forms an extensive filament system that extends from sperm villipoda, along the leading edge of the pseudopod. This Caenorhabditis elegans protein is Major sperm protein 19/31/40/45/50/51/53/59/61/65/81/113/142 (msp-19).